An 870-amino-acid chain; its full sequence is Leucine--tRNA ligase (870 aa).

The short motif at 42 to 52 (PYPSGKLHMGH) is the 'HIGH' region element. The 'KMSKS' region signature appears at 629-633 (KMSKS). Lys-632 lines the ATP pocket.

It belongs to the class-I aminoacyl-tRNA synthetase family.

It is found in the cytoplasm. It catalyses the reaction tRNA(Leu) + L-leucine + ATP = L-leucyl-tRNA(Leu) + AMP + diphosphate. The polypeptide is Leucine--tRNA ligase (Ectopseudomonas mendocina (strain ymp) (Pseudomonas mendocina)).